Here is a 275-residue protein sequence, read N- to C-terminus: Penicillin-insensitive murein endopeptidase (275 aa).

Positions 1–19 are cleaved as a signal peptide; sequence MKNWIVGMVALVTMVPVMA. 3 disulfides stabilise this stretch: Cys-44–Cys-264, Cys-187–Cys-235, and Cys-216–Cys-223. Zn(2+) is bound by residues His-110, His-113, Asp-120, Asp-147, and His-211. Residues 227–262 are disordered; it reads DTPPPGDGCGAELESWFQPPPPSAKPGKTLPPPLPP. A compositionally biased stretch (pro residues) spans 244-262; sequence QPPPPSAKPGKTLPPPLPP.

This sequence belongs to the peptidase M74 family. Dimer. Requires Zn(2+) as cofactor.

It is found in the periplasm. Functionally, murein endopeptidase that cleaves the D-alanyl-meso-2,6-diamino-pimelyl amide bond that connects peptidoglycan strands. Likely plays a role in the removal of murein from the sacculus. This chain is Penicillin-insensitive murein endopeptidase, found in Yersinia pestis.